Here is a 200-residue protein sequence, read N- to C-terminus: Putative vacuolar protein sorting-associated protein 24 homolog 2 (200 aa).

The stretch at 2-23 (TIKSLLSDIEREERNVHKAIKD) forms a coiled coil.

It belongs to the SNF7 family. As to quaternary structure, component of the endosomal sorting required for transport complex III (ESCRT-III), composed at least of VPS2, VPS20, VPS24 and VPS32.

Its subcellular location is the endosome. Functionally, component of the ESCRT-III complex, which is required for multivesicular bodies (MVBs) formation and sorting of endosomal cargo proteins into MVBs. The ESCRT-III complex is probably involved in the concentration of MVB cargo. This is Putative vacuolar protein sorting-associated protein 24 homolog 2 (VPS24-2) from Arabidopsis thaliana (Mouse-ear cress).